The sequence spans 99 residues: Co-chaperonin GroES (99 aa).

It belongs to the GroES chaperonin family. In terms of assembly, heptamer of 7 subunits arranged in a ring. Interacts with the chaperonin GroEL.

The protein resides in the cytoplasm. In terms of biological role, together with the chaperonin GroEL, plays an essential role in assisting protein folding. The GroEL-GroES system forms a nano-cage that allows encapsulation of the non-native substrate proteins and provides a physical environment optimized to promote and accelerate protein folding. GroES binds to the apical surface of the GroEL ring, thereby capping the opening of the GroEL channel. In Corynebacterium jeikeium (strain K411), this protein is Co-chaperonin GroES.